A 526-amino-acid chain; its full sequence is Biotin carboxylase 2, chloroplastic (526 aa).

Residues 1–71 constitute a chloroplast transit peptide; sequence MEATLPVCKS…GVTCRAEKIL (71 aa). Residues lysine 181, 213–274, lysine 223, 229–230, 265–268, and histidine 273 each bind ATP; these read ASEI…PRHI, GG, and EKYV. An ATP-grasp domain is found at 185-382; the sequence is RETMKKANVP…LIEEQIRVAM (198 aa). Position 302 (lysine 302) interacts with hydrogencarbonate. The ATP site is built by glutamate 340 and glutamate 353. Mg(2+) contacts are provided by glutamate 340, glutamate 353, and asparagine 355. Mn(2+) is bound by residues glutamate 340, glutamate 353, and asparagine 355. Residues arginine 357, valine 360, and arginine 403 each contribute to the hydrogencarbonate site. The active site involves arginine 357. Arginine 403 contacts biotin.

In terms of assembly, acetyl-CoA carboxylase is a heterohexamer composed of biotin carboxyl carrier protein, biotin carboxylase and two subunits each of ACCase subunit alpha and ACCase plastid-coded subunit beta (accD). Mg(2+) serves as cofactor. Mn(2+) is required as a cofactor.

It is found in the plastid. Its subcellular location is the chloroplast. The catalysed reaction is N(6)-biotinyl-L-lysyl-[protein] + hydrogencarbonate + ATP = N(6)-carboxybiotinyl-L-lysyl-[protein] + ADP + phosphate + H(+). It participates in lipid metabolism; malonyl-CoA biosynthesis; malonyl-CoA from acetyl-CoA: step 1/1. This protein is a component of the acetyl coenzyme A carboxylase complex; first, biotin carboxylase catalyzes the carboxylation of the carrier protein and then the transcarboxylase transfers the carboxyl group to form malonyl-CoA. This Populus trichocarpa (Western balsam poplar) protein is Biotin carboxylase 2, chloroplastic.